The sequence spans 149 residues: Large ribosomal subunit protein bL9 (149 aa).

This sequence belongs to the bacterial ribosomal protein bL9 family.

Functionally, binds to the 23S rRNA. This chain is Large ribosomal subunit protein bL9, found in Glaesserella parasuis serovar 5 (strain SH0165) (Haemophilus parasuis).